The primary structure comprises 391 residues: MSSSTVITNIAALVTNDPSLGDHSPLGLVRDAAVVVEGDRVVWTGESSKAPATDNRVDADGRAVLPGFVDSHSHLLFAGDRTEEFNARMSGRPYSAGGIRTTVAATRAASDAELEAGLTRYLAEALRQGTTTFETKSGYGLTTADESRALRVAARHTDEVTFLGAHIVAPELADDPAAYVDLVTGEMLDACAPHARWIDVFCEKGAFDGDQARAILTAGKARGLHPRIHANQLSYGPGVRLAVELDAASADHCTHLTDADVDALANSRTVATLLPGAEFSTRAQWPDARRLIDAGATVALSTDCNPGSSFTSSVPFCIALAVRDMGMTPDEAVWSATAGGAAALRREDVGRLVPGAYADLTLLDAPSHVHLAYRPGVPLVAGVWRRGVRKV.

Fe(3+) contacts are provided by H72 and H74. 2 residues coordinate Zn(2+): H72 and H74. Positions 81, 139, and 166 each coordinate 4-imidazolone-5-propanoate. Y139 serves as a coordination point for N-formimidoyl-L-glutamate. Fe(3+) is bound at residue H229. H229 contacts Zn(2+). 4-imidazolone-5-propanoate is bound at residue Q232. Residue D303 participates in Fe(3+) binding. D303 provides a ligand contact to Zn(2+). Positions 305 and 307 each coordinate N-formimidoyl-L-glutamate. S308 provides a ligand contact to 4-imidazolone-5-propanoate.

The protein belongs to the metallo-dependent hydrolases superfamily. HutI family. Zn(2+) serves as cofactor. It depends on Fe(3+) as a cofactor.

The protein localises to the cytoplasm. It carries out the reaction 4-imidazolone-5-propanoate + H2O = N-formimidoyl-L-glutamate. It functions in the pathway amino-acid degradation; L-histidine degradation into L-glutamate; N-formimidoyl-L-glutamate from L-histidine: step 3/3. Its function is as follows. Catalyzes the hydrolytic cleavage of the carbon-nitrogen bond in imidazolone-5-propanoate to yield N-formimidoyl-L-glutamate. It is the third step in the universal histidine degradation pathway. In Streptomyces coelicolor (strain ATCC BAA-471 / A3(2) / M145), this protein is Imidazolonepropionase.